A 107-amino-acid polypeptide reads, in one-letter code: U-scoloptoxin(19)-Sm1a (107 aa).

Positions 1-20 are cleaved as a signal peptide; that stretch reads MRFLVSVAFLLTVSSLLVSG.

It belongs to the scoloptoxin-19 family. Post-translationally, contains 6 disulfide bonds. In terms of tissue distribution, expressed by the venom gland.

The protein resides in the secreted. The polypeptide is U-scoloptoxin(19)-Sm1a (Scolopendra morsitans (Tanzanian blue ringleg centipede)).